A 139-amino-acid chain; its full sequence is FAD synthase (139 aa).

Residues 8–9, 13–16, D92, and Y119 contribute to the ATP site; these read VF and HPGH.

The protein belongs to the archaeal FAD synthase family. Homodimer. A divalent metal cation is required as a cofactor.

The catalysed reaction is FMN + ATP + H(+) = FAD + diphosphate. It functions in the pathway cofactor biosynthesis; FAD biosynthesis; FAD from FMN: step 1/1. Its function is as follows. Catalyzes the transfer of the AMP portion of ATP to flavin mononucleotide (FMN) to produce flavin adenine dinucleotide (FAD) coenzyme. In Picrophilus torridus (strain ATCC 700027 / DSM 9790 / JCM 10055 / NBRC 100828 / KAW 2/3), this protein is FAD synthase.